The primary structure comprises 584 residues: Peroxynitrite isomerase THAP4 (584 aa).

The THAP-type zinc-finger motif lies at Met1–Phe85. Residues Ile84–Ala330 form a disordered region. Basic residues predominate over residues Glu89–Asp104. A compositionally biased stretch (low complexity) spans Gly122 to Ala138. Residues Ala158–Asp178 are compositionally biased toward basic and acidic residues. Residues Gly190–Asp208 show a composition bias toward low complexity. The HCFC1-binding motif (HBM) signature appears at Leu236 to Tyr239. Ser240 is modified (phosphoserine). The segment covering Glu248–Glu267 has biased composition (basic and acidic residues). The tract at residues Pro422–Pro584 is nitrobindin. 2 residues coordinate heme b: Thr451 and His574.

In the C-terminal section; belongs to the nitrobindin family. In terms of assembly, homodimer. Heme b serves as cofactor.

Its subcellular location is the cytoplasm. It localises to the nucleus. It catalyses the reaction peroxynitrite = nitrate. The protein operates within nitrogen metabolism. Functionally, heme-binding protein able to scavenge peroxynitrite and to protect free L-tyrosine against peroxynitrite-mediated nitration, by acting as a peroxynitrite isomerase that converts peroxynitrite to nitrate. Therefore, this protein likely plays a role in peroxynitrite sensing and in the detoxification of reactive nitrogen and oxygen species (RNS and ROS, respectively). Is able to bind nitric oxide (NO) in vitro, but may act as a sensor of peroxynitrite levels in vivo, possibly modulating the transcriptional activity residing in the N-terminal region. The sequence is that of Peroxynitrite isomerase THAP4 from Bos taurus (Bovine).